Here is a 520-residue protein sequence, read N- to C-terminus: Sterile alpha motif domain-containing protein 3 (520 aa).

The 68-residue stretch at 4-71 folds into the SAM domain; that stretch reads WSVDQVCKWL…KYKQGNQELK (68 aa). The interval 67–104 is disordered; it reads NQELKPTGGPADTSTLTPAQAAPEHEQNPSPTSHGDQT. The span at 94–104 shows a compositional bias: polar residues; the sequence is NPSPTSHGDQT.

The chain is Sterile alpha motif domain-containing protein 3 (Samd3) from Mus musculus (Mouse).